Here is a 23-residue protein sequence, read N- to C-terminus: Protein NS0 (23 aa).

Functionally, may play a role inhost modulation. Is not involved in viral protein synthesis or DNA replication. The protein is Protein NS0 (NS0) of Porcine circovirus 2 (PCV2).